The following is a 1079-amino-acid chain: Translation initiation factor IF-2 (1079 aa).

3 stretches are compositionally biased toward basic and acidic residues: residues 52–65, 75–90, and 102–134; these read VQAQ…KEGN, RDGD…KAPE, and APER…KEPQ. Positions 52–488 are disordered; that stretch reads VQAQRDGGAR…RGKKDVRPAA (437 aa). Residues 150–184 show a composition bias toward low complexity; that stretch reads APVAKVVEAAPAETPAPEAPAVKATVTAEAAPAKT. Residues 185–194 show a composition bias toward basic and acidic residues; the sequence is VEPESERPQA. Residues 276–291 are compositionally biased toward low complexity; the sequence is AAVAQQQMQQQAAQQQ. Over residues 306-327 the composition is skewed to basic and acidic residues; sequence GGYRPEGQREGGYRPEGQREGG. Low complexity-rich tracts occupy residues 348–370 and 380–398; these read EGGY…GPRP and PGAP…APRP. A compositionally biased stretch (gly residues) spans 419–429; sequence PRPGGFGGAPG. A compositionally biased stretch (basic and acidic residues) spans 461–471; it reads PRGRSDDDVMR. Residues 473-482 show a composition bias toward basic residues; sequence PRGRGKRGKK. A tr-type G domain is found at 578 to 745; sequence TRPPVVTIMG…LIAIQAEILE (168 aa). Residues 587–594 form a G1 region; that stretch reads GHVDHGKT. Residue 587–594 participates in GTP binding; sequence GHVDHGKT. The G2 stretch occupies residues 612 to 616; it reads GITQH. The interval 633–636 is G3; sequence DTPG. Residues 633 to 637 and 687 to 690 each bind GTP; these read DTPGH and NKMD. Positions 687–690 are G4; the sequence is NKMD. The tract at residues 723 to 725 is G5; that stretch reads SAK.

Belongs to the TRAFAC class translation factor GTPase superfamily. Classic translation factor GTPase family. IF-2 subfamily.

The protein resides in the cytoplasm. Functionally, one of the essential components for the initiation of protein synthesis. Protects formylmethionyl-tRNA from spontaneous hydrolysis and promotes its binding to the 30S ribosomal subunits. Also involved in the hydrolysis of GTP during the formation of the 70S ribosomal complex. The sequence is that of Translation initiation factor IF-2 from Nitratidesulfovibrio vulgaris (strain ATCC 29579 / DSM 644 / CCUG 34227 / NCIMB 8303 / VKM B-1760 / Hildenborough) (Desulfovibrio vulgaris).